The primary structure comprises 413 residues: Multifunctional CCA protein (413 aa).

ATP-binding residues include Gly-8 and Arg-11. CTP is bound by residues Gly-8 and Arg-11. Mg(2+) is bound by residues Asp-21 and Asp-23. Residues Arg-91, Arg-137, and Arg-140 each coordinate ATP. The CTP site is built by Arg-91, Arg-137, and Arg-140. Residues 225-326 (TGVHVMMVID…ANLLQGVDAY (102 aa)) form the HD domain.

Belongs to the tRNA nucleotidyltransferase/poly(A) polymerase family. Bacterial CCA-adding enzyme type 1 subfamily. In terms of assembly, monomer. Can also form homodimers and oligomers. Mg(2+) serves as cofactor. It depends on Ni(2+) as a cofactor.

It catalyses the reaction a tRNA precursor + 2 CTP + ATP = a tRNA with a 3' CCA end + 3 diphosphate. It carries out the reaction a tRNA with a 3' CCA end + 2 CTP + ATP = a tRNA with a 3' CCACCA end + 3 diphosphate. Catalyzes the addition and repair of the essential 3'-terminal CCA sequence in tRNAs without using a nucleic acid template. Adds these three nucleotides in the order of C, C, and A to the tRNA nucleotide-73, using CTP and ATP as substrates and producing inorganic pyrophosphate. tRNA 3'-terminal CCA addition is required both for tRNA processing and repair. Also involved in tRNA surveillance by mediating tandem CCA addition to generate a CCACCA at the 3' terminus of unstable tRNAs. While stable tRNAs receive only 3'-terminal CCA, unstable tRNAs are marked with CCACCA and rapidly degraded. The sequence is that of Multifunctional CCA protein from Nitrosospira multiformis (strain ATCC 25196 / NCIMB 11849 / C 71).